Consider the following 418-residue polypeptide: Serine hydroxymethyltransferase (418 aa).

(6S)-5,6,7,8-tetrahydrofolate-binding positions include Leu121 and 125–127 (GHL). Lys230 is subject to N6-(pyridoxal phosphate)lysine. 355 to 357 (SPF) lines the (6S)-5,6,7,8-tetrahydrofolate pocket.

This sequence belongs to the SHMT family. As to quaternary structure, homodimer. Pyridoxal 5'-phosphate is required as a cofactor.

The protein resides in the cytoplasm. The catalysed reaction is (6R)-5,10-methylene-5,6,7,8-tetrahydrofolate + glycine + H2O = (6S)-5,6,7,8-tetrahydrofolate + L-serine. The protein operates within one-carbon metabolism; tetrahydrofolate interconversion. Its pathway is amino-acid biosynthesis; glycine biosynthesis; glycine from L-serine: step 1/1. In terms of biological role, catalyzes the reversible interconversion of serine and glycine with tetrahydrofolate (THF) serving as the one-carbon carrier. This reaction serves as the major source of one-carbon groups required for the biosynthesis of purines, thymidylate, methionine, and other important biomolecules. Also exhibits THF-independent aldolase activity toward beta-hydroxyamino acids, producing glycine and aldehydes, via a retro-aldol mechanism. This chain is Serine hydroxymethyltransferase, found in Streptococcus pyogenes serotype M3 (strain ATCC BAA-595 / MGAS315).